Consider the following 148-residue polypeptide: 3-hydroxyacyl-[acyl-carrier-protein] dehydratase FabZ (148 aa).

Residue His55 is part of the active site.

Belongs to the thioester dehydratase family. FabZ subfamily.

It is found in the cytoplasm. The enzyme catalyses a (3R)-hydroxyacyl-[ACP] = a (2E)-enoyl-[ACP] + H2O. Functionally, involved in unsaturated fatty acids biosynthesis. Catalyzes the dehydration of short chain beta-hydroxyacyl-ACPs and long chain saturated and unsaturated beta-hydroxyacyl-ACPs. In Haemophilus influenzae (strain ATCC 51907 / DSM 11121 / KW20 / Rd), this protein is 3-hydroxyacyl-[acyl-carrier-protein] dehydratase FabZ.